The following is a 399-amino-acid chain: Nicotinate phosphoribosyltransferase (399 aa).

Histidine 221 is modified (phosphohistidine; by autocatalysis).

This sequence belongs to the NAPRTase family. In terms of processing, transiently phosphorylated on a His residue during the reaction cycle. Phosphorylation strongly increases the affinity for substrates and increases the rate of nicotinate D-ribonucleotide production. Dephosphorylation regenerates the low-affinity form of the enzyme, leading to product release.

The catalysed reaction is nicotinate + 5-phospho-alpha-D-ribose 1-diphosphate + ATP + H2O = nicotinate beta-D-ribonucleotide + ADP + phosphate + diphosphate. It participates in cofactor biosynthesis; NAD(+) biosynthesis; nicotinate D-ribonucleotide from nicotinate: step 1/1. Catalyzes the synthesis of beta-nicotinate D-ribonucleotide from nicotinate and 5-phospho-D-ribose 1-phosphate at the expense of ATP. This Buchnera aphidicola subsp. Acyrthosiphon pisum (strain 5A) protein is Nicotinate phosphoribosyltransferase.